The following is a 451-amino-acid chain: Aminodeoxychorismate synthase component 1 (451 aa).

Residues S34, 41–44 (HNRF), and 238–240 (PFS) each bind L-tryptophan. Residue E256 is the Proton donor of the active site. The N6-(4-deoxychorismate)-lysine intermediate role is filled by K272.

It belongs to the anthranilate synthase component I family. As to quaternary structure, monomer. Heterodimer consisting of two non-identical subunits: a glutamine amidotransferase subunit (PabA) and a aminodeoxychorismate synthase subunit (PabB). It depends on Mg(2+) as a cofactor.

It catalyses the reaction chorismate + L-glutamine = 4-amino-4-deoxychorismate + L-glutamate. Its pathway is cofactor biosynthesis; tetrahydrofolate biosynthesis; 4-aminobenzoate from chorismate: step 1/2. Part of a heterodimeric complex that catalyzes the two-step biosynthesis of 4-amino-4-deoxychorismate (ADC), a precursor of p-aminobenzoate (PABA) and tetrahydrofolate. In the first step, a glutamine amidotransferase (PabA) generates ammonia as a substrate that, along with chorismate, is used in the second step, catalyzed by aminodeoxychorismate synthase (PabB) to produce ADC. The polypeptide is Aminodeoxychorismate synthase component 1 (pabB) (Klebsiella aerogenes (Enterobacter aerogenes)).